The following is a 446-amino-acid chain: Argininosuccinate synthase (446 aa).

Residues 17 to 25 and A43 contribute to the ATP site; that span reads AFSGGLDTS. Residue Y99 coordinates L-citrulline. 2 residues coordinate ATP: G129 and T131. 3 residues coordinate L-aspartate: T131, N135, and D136. L-citrulline is bound at residue N135. ATP is bound at residue D136. Residues R139 and S192 each contribute to the L-citrulline site. An ATP-binding site is contributed by D194. L-citrulline-binding residues include T201, E203, and E280.

The protein belongs to the argininosuccinate synthase family. Type 2 subfamily. Homotetramer.

The protein localises to the cytoplasm. The catalysed reaction is L-citrulline + L-aspartate + ATP = 2-(N(omega)-L-arginino)succinate + AMP + diphosphate + H(+). It participates in amino-acid biosynthesis; L-arginine biosynthesis; L-arginine from L-ornithine and carbamoyl phosphate: step 2/3. The polypeptide is Argininosuccinate synthase (Variovorax paradoxus (strain S110)).